The following is a 324-amino-acid chain: MSEQALRLGTRRSKLAMAQSGQVADAVRQVTGRPVELVEITTYGDTSREHLAQIGGTGVFVTALRDALLRGEVDFAVHSLKDLPTAQPDELALAAVPVREDPRDVLVARDGLTFEELGAPSPKGTARVGTGSPRRMAQLNAYARSHGLAVETVPIRGNVDSRIGYVRSGELDGVVLAAAGLHRIGRIDEVTEFLPVDTVLPAPGQGALAIECAADNADLIAALAELDDPFTRAAVTAERSLLAALEAGCSAPVGALADLLADGQIVTEMRLRGVVGTTDGSTLVQLSTTGPVPETHDQAMALGRELAAEMLAKGAAGLMGEREH.

At Cys-249 the chain carries S-(dipyrrolylmethanemethyl)cysteine.

The protein belongs to the HMBS family. In terms of assembly, monomer. Requires dipyrromethane as cofactor.

It catalyses the reaction 4 porphobilinogen + H2O = hydroxymethylbilane + 4 NH4(+). It participates in porphyrin-containing compound metabolism; protoporphyrin-IX biosynthesis; coproporphyrinogen-III from 5-aminolevulinate: step 2/4. Functionally, tetrapolymerization of the monopyrrole PBG into the hydroxymethylbilane pre-uroporphyrinogen in several discrete steps. In Streptomyces avermitilis (strain ATCC 31267 / DSM 46492 / JCM 5070 / NBRC 14893 / NCIMB 12804 / NRRL 8165 / MA-4680), this protein is Porphobilinogen deaminase 1 (hemC1).